Here is a 439-residue protein sequence, read N- to C-terminus: Trigger factor (439 aa).

Positions 163–248 (GDRVTIDYRG…LNKLEAPKLP (86 aa)) constitute a PPIase FKBP-type domain.

The protein belongs to the FKBP-type PPIase family. Tig subfamily.

It is found in the cytoplasm. It catalyses the reaction [protein]-peptidylproline (omega=180) = [protein]-peptidylproline (omega=0). In terms of biological role, involved in protein export. Acts as a chaperone by maintaining the newly synthesized protein in an open conformation. Functions as a peptidyl-prolyl cis-trans isomerase. This chain is Trigger factor, found in Nitrosomonas europaea (strain ATCC 19718 / CIP 103999 / KCTC 2705 / NBRC 14298).